A 77-amino-acid chain; its full sequence is uncharacterized protein (77 aa).

The interval 56 to 77 is disordered; it reads SVIPKQQPPSSAAAISESEFED. The span at 65-77 shows a compositional bias: low complexity; sequence SSAAAISESEFED.

This is an uncharacterized protein from Frog virus 3 (isolate Goorha) (FV-3).